The sequence spans 242 residues: Small ribosomal subunit protein uS3 (242 aa).

A KH type-2 domain is found at 39–110 (IRRFIHKKYG…QVRINVVEVE (72 aa)). The disordered stretch occupies residues 217–242 (TMPVGASPRRRGNRRPQQFEDRSNEG). Residues 233 to 242 (QQFEDRSNEG) are compositionally biased toward basic and acidic residues.

The protein belongs to the universal ribosomal protein uS3 family. As to quaternary structure, part of the 30S ribosomal subunit. Forms a tight complex with proteins S10 and S14.

Its function is as follows. Binds the lower part of the 30S subunit head. Binds mRNA in the 70S ribosome, positioning it for translation. This chain is Small ribosomal subunit protein uS3, found in Prochlorococcus marinus (strain MIT 9313).